We begin with the raw amino-acid sequence, 531 residues long: Arginine--tRNA ligase (531 aa).

Positions 113 to 123 (ANPTGPLHIGH) match the 'HIGH' region motif.

Belongs to the class-I aminoacyl-tRNA synthetase family. As to quaternary structure, monomer.

It localises to the cytoplasm. It carries out the reaction tRNA(Arg) + L-arginine + ATP = L-arginyl-tRNA(Arg) + AMP + diphosphate. This chain is Arginine--tRNA ligase, found in Campylobacter fetus subsp. fetus (strain 82-40).